Reading from the N-terminus, the 275-residue chain is Uroplakin-3b (275 aa).

Residues 1 to 26 (MVRTRWQPPLRALLLLVLVWLPQSLS) form the signal peptide. The Lumenal segment spans residues 27 to 196 (LDLIAYVPQI…DTWPGRRSGC (170 aa)). Asparagine 77 carries an N-linked (GlcNAc...) asparagine glycan. The helical transmembrane segment at 197 to 217 (MIVITSILSALAGLLLLAFLA) threads the bilayer. Topologically, residues 218–275 (ASTTRFSSLWWPEEAPEQLRIGSFMGKRYMTHHIPPSEAATLPVGCEPGLDPLPSLSP) are cytoplasmic.

Belongs to the uroplakin-3 family. In terms of assembly, heterodimer with uroplakin-1B (UPK1B). Expression is urothelium-specific.

It localises to the cell membrane. Its function is as follows. Component of the asymmetric unit membrane (AUM); a highly specialized biomembrane elaborated by terminally differentiated urothelial cells. May play an important role in AUM-cytoskeleton interaction in terminally differentiated urothelial cells. It also contributes to the formation of urothelial glycocalyx which may play an important role in preventing bacterial adherence. This chain is Uroplakin-3b (Upk3b), found in Mus musculus (Mouse).